We begin with the raw amino-acid sequence, 219 residues long: Small ribosomal subunit protein uS3c (219 aa).

The 73-residue stretch at 39-111 (IRKFLMEKIK…NSFFNVKINF (73 aa)) folds into the KH type-2 domain.

The protein belongs to the universal ribosomal protein uS3 family. Part of the 30S ribosomal subunit.

It is found in the plastid. In Euglena longa (Euglenophycean alga), this protein is Small ribosomal subunit protein uS3c (rps3).